The following is a 428-amino-acid chain: Adenylosuccinate synthetase (428 aa).

Residues 12-18 and 40-42 contribute to the GTP site; these read GDEGKGK and GHT. Aspartate 13 (proton acceptor) is an active-site residue. The Mg(2+) site is built by aspartate 13 and glycine 40. IMP contacts are provided by residues 13–16, 38–41, threonine 133, arginine 147, asparagine 224, threonine 239, and arginine 303; these read DEGK and NAGH. Histidine 41 acts as the Proton donor in catalysis. 299–305 contacts substrate; that stretch reads TTTGRRR. GTP-binding positions include arginine 305, 331–333, and 413–415; these read KLD and GVG.

This sequence belongs to the adenylosuccinate synthetase family. Homodimer. Mg(2+) serves as cofactor.

The protein localises to the cytoplasm. It carries out the reaction IMP + L-aspartate + GTP = N(6)-(1,2-dicarboxyethyl)-AMP + GDP + phosphate + 2 H(+). The protein operates within purine metabolism; AMP biosynthesis via de novo pathway; AMP from IMP: step 1/2. Its function is as follows. Plays an important role in the de novo pathway and in the salvage pathway of purine nucleotide biosynthesis. Catalyzes the first committed step in the biosynthesis of AMP from IMP. This Coprinopsis cinerea (strain Okayama-7 / 130 / ATCC MYA-4618 / FGSC 9003) (Inky cap fungus) protein is Adenylosuccinate synthetase.